Here is a 330-residue protein sequence, read N- to C-terminus: Ketol-acid reductoisomerase (NADP(+)) (330 aa).

Residues 2 to 182 (VEIYYDDDAS…GGTRAGALRT (181 aa)) enclose the KARI N-terminal Rossmann domain. NADP(+)-binding positions include 25 to 28 (YGSQ), Ser51, and Ser53. His108 is a catalytic residue. Gly134 is a binding site for NADP(+). The KARI C-terminal knotted domain maps to 183–328 (TFTEETETDL…AKLRPLMSWI (146 aa)). Residues Asp191, Glu195, Glu227, and Glu231 each contribute to the Mg(2+) site. Residue Ser252 participates in substrate binding.

This sequence belongs to the ketol-acid reductoisomerase family. Mg(2+) is required as a cofactor.

It carries out the reaction (2R)-2,3-dihydroxy-3-methylbutanoate + NADP(+) = (2S)-2-acetolactate + NADPH + H(+). The catalysed reaction is (2R,3R)-2,3-dihydroxy-3-methylpentanoate + NADP(+) = (S)-2-ethyl-2-hydroxy-3-oxobutanoate + NADPH + H(+). Its pathway is amino-acid biosynthesis; L-isoleucine biosynthesis; L-isoleucine from 2-oxobutanoate: step 2/4. It participates in amino-acid biosynthesis; L-valine biosynthesis; L-valine from pyruvate: step 2/4. Its function is as follows. Involved in the biosynthesis of branched-chain amino acids (BCAA). Catalyzes an alkyl-migration followed by a ketol-acid reduction of (S)-2-acetolactate (S2AL) to yield (R)-2,3-dihydroxy-isovalerate. In the isomerase reaction, S2AL is rearranged via a Mg-dependent methyl migration to produce 3-hydroxy-3-methyl-2-ketobutyrate (HMKB). In the reductase reaction, this 2-ketoacid undergoes a metal-dependent reduction by NADPH to yield (R)-2,3-dihydroxy-isovalerate. This Frankia alni (strain DSM 45986 / CECT 9034 / ACN14a) protein is Ketol-acid reductoisomerase (NADP(+)).